Here is a 318-residue protein sequence, read N- to C-terminus: uncharacterized protein (318 aa).

Residues 19-63 (VPPDARHHEPRPGMTDHPDTGNGIGLTGRPPRAIPDPAPRSSHGP) are disordered. Basic and acidic residues predominate over residues 21-37 (PDARHHEPRPGMTDHPD). Position 72-79 (72-79 (QKGGVGKT)) interacts with ATP.

The protein belongs to the ParA family.

In terms of biological role, may play a role in septum formation. This is an uncharacterized protein from Mycobacterium tuberculosis (strain CDC 1551 / Oshkosh).